The following is a 107-amino-acid chain: UPF0122 protein EAT1b_2891 (107 aa).

It belongs to the UPF0122 family.

In terms of biological role, might take part in the signal recognition particle (SRP) pathway. This is inferred from the conservation of its genetic proximity to ftsY/ffh. May be a regulatory protein. The protein is UPF0122 protein EAT1b_2891 of Exiguobacterium sp. (strain ATCC BAA-1283 / AT1b).